Consider the following 838-residue polypeptide: V-type proton ATPase 116 kDa subunit a 1 (838 aa).

Residues 1–388 (MGELFRSEEM…DAYGIGTYRE (388 aa)) lie on the Cytoplasmic side of the membrane. Residues Thr-250 and Thr-360 each carry the phosphothreonine modification. Tyr-364 is subject to Phosphotyrosine. A helical transmembrane segment spans residues 389 to 407 (INPAPYTVITFPFLFAVMF). The Vacuolar segment spans residues 408–409 (GD). The chain crosses the membrane as a helical span at residues 410–426 (FGHGILMTLFAVWMVLR). At 427 to 441 (ESRILSQKNENEMFS) the chain is on the cytoplasmic side. The helical transmembrane segment at 442–471 (MVFSGRYIILLMGLFSIYTGLIYNDCFSKS) threads the bilayer. Topologically, residues 472-535 (LNIFGSSWSV…ATNKLTFLNS (64 aa)) are vacuolar. Residues 536–555 (FKMKMSVILGIIHMLFGVSL) form a helical membrane-spanning segment. Topologically, residues 556-573 (SLFNHIYFKKPLNIYFGF) are cytoplasmic. The helical transmembrane segment at 574 to 594 (IPEIIFMSSLFGYLVILIFYK) threads the bilayer. Topologically, residues 595-639 (WTAYDAHSSRNAPSLLIHFINMFLFSYPESGNAMLYSGQKGIQCF) are vacuolar. The helical transmembrane segment at 640–659 (LIVVAMLCVPWMLLFKPLIL) threads the bilayer. Topologically, residues 660–725 (RHQYLRKKHL…DTMVHQAIHT (66 aa)) are cytoplasmic. The chain crosses the membrane as a helical span at residues 726–750 (IEYCLGCISNTASYLRLWALSLAHA). Over 751-771 (QLSEVLWTMVIHIGLHVRSLA) the chain is Vacuolar. Residues 772–810 (GGLGLFFIFAAFATLTVAILLIMEGLSAFLHALRLHWVE) form a helical membrane-spanning segment. Over 811 to 838 (FQNKFYTGTGFKFLPFSFEHIREGKFDE) the chain is Cytoplasmic.

Belongs to the V-ATPase 116 kDa subunit family. V-ATPase is a heteromultimeric enzyme made up of two complexes: the ATP-hydrolytic V1 complex and the proton translocation V0 complex. The V1 complex consists of three catalytic AB heterodimers that form a heterohexamer, three peripheral stalks each consisting of EG heterodimers, one central rotor including subunits D and F, and the regulatory subunits C and H. The proton translocation complex V0 consists of the proton transport subunit a, a ring of proteolipid subunits c9c'', rotary subunit d, subunits e and f, and the accessory subunits ATP6AP1/Ac45 and ATP6AP2/PRR. Interacts with SPAAR. As to expression, expressed in brain (at protein level). In terms of tissue distribution, expressed in heart, kidney, liver, spleen, and to a lesser extent in brain.

The protein localises to the cytoplasmic vesicle. Its subcellular location is the clathrin-coated vesicle membrane. It localises to the secretory vesicle. The protein resides in the synaptic vesicle membrane. It is found in the melanosome. Its function is as follows. Subunit of the V0 complex of vacuolar(H+)-ATPase (V-ATPase), a multisubunit enzyme composed of a peripheral complex (V1) that hydrolyzes ATP and a membrane integral complex (V0) that translocates protons. V-ATPase is responsible for the acidification of various organelles, such as lysosomes, endosomes, the trans-Golgi network, and secretory granules, including synaptic vesicles. In certain cell types, can be exported to the plasma membrane, where it is involved in the acidification of the extracellular environment. Required for assembly and activity of the vacuolar ATPase. Through its action on compartment acidification, plays an essential role in neuronal development in terms of integrity and connectivity of neurons. The chain is V-type proton ATPase 116 kDa subunit a 1 (Atp6v0a1) from Rattus norvegicus (Rat).